Reading from the N-terminus, the 94-residue chain is Co-chaperonin GroES (94 aa).

Belongs to the GroES chaperonin family. As to quaternary structure, heptamer of 7 subunits arranged in a ring. Interacts with the chaperonin GroEL.

Its subcellular location is the cytoplasm. Together with the chaperonin GroEL, plays an essential role in assisting protein folding. The GroEL-GroES system forms a nano-cage that allows encapsulation of the non-native substrate proteins and provides a physical environment optimized to promote and accelerate protein folding. GroES binds to the apical surface of the GroEL ring, thereby capping the opening of the GroEL channel. The sequence is that of Co-chaperonin GroES from Staphylococcus epidermidis.